Reading from the N-terminus, the 160-residue chain is Putative oxygenase ATEG_00330 (160 aa).

Residues 24–100 (HYFGTALHAK…RNIAADPEFA (77 aa)) form the EthD domain.

This sequence belongs to the tpcK family.

Putative oxygenase; part of the gene cluster that mediates the biosynthesis of isoflavipucine. The PKS part of the PKS-NRPS ATEG_00325 probably assembles a triketide from an acetyl starter and two malonyl-CoA extender units. The poly-beta-keto intermediate would then be fused to the leucine unit by the NRPS part. The resulting amide would be liberated from the PKS-NRPS through reductive release of the linear PKS-NRPS product from the enzyme complex. Further steps in isoflapucine synthesis include a cyclization step, an oxidation step, a hydrolysis step involving a trans-amidation, and an additional oxidation step, leading to flavipucine. Formation of isoflavipucine from flavipucine requires an unusual rearrangement. Alternative rearrangement reactions could build up rubrobramide, representing a branching of flavipucine biosynthesis. The enzymes involved in the post-PKS-NRPS steps have not been identified yet, but the putative oxygenases ATEG_003329 and ATEG_00330 encoded by the cluster could play a role. This is Putative oxygenase ATEG_00330 from Aspergillus terreus (strain NIH 2624 / FGSC A1156).